Reading from the N-terminus, the 101-residue chain is Aspartyl/glutamyl-tRNA(Asn/Gln) amidotransferase subunit C (101 aa).

It belongs to the GatC family. As to quaternary structure, heterotrimer of A, B and C subunits.

The enzyme catalyses L-glutamyl-tRNA(Gln) + L-glutamine + ATP + H2O = L-glutaminyl-tRNA(Gln) + L-glutamate + ADP + phosphate + H(+). It carries out the reaction L-aspartyl-tRNA(Asn) + L-glutamine + ATP + H2O = L-asparaginyl-tRNA(Asn) + L-glutamate + ADP + phosphate + 2 H(+). In terms of biological role, allows the formation of correctly charged Asn-tRNA(Asn) or Gln-tRNA(Gln) through the transamidation of misacylated Asp-tRNA(Asn) or Glu-tRNA(Gln) in organisms which lack either or both of asparaginyl-tRNA or glutaminyl-tRNA synthetases. The reaction takes place in the presence of glutamine and ATP through an activated phospho-Asp-tRNA(Asn) or phospho-Glu-tRNA(Gln). The chain is Aspartyl/glutamyl-tRNA(Asn/Gln) amidotransferase subunit C from Salinispora tropica (strain ATCC BAA-916 / DSM 44818 / JCM 13857 / NBRC 105044 / CNB-440).